A 525-amino-acid polypeptide reads, in one-letter code: uncharacterized protein (525 aa).

S55 is modified (phosphoserine). The next 13 membrane-spanning stretches (helical) occupy residues 81 to 101 (AYIVLLSTSLQMYVFWTPNFY), 120 to 140 (LLGQSMFVLGVALGPLFLGPL), 147 to 167 (KLVYIGSLIIYVCFCISCALA), 173 to 193 (LVISMLIMGVVGSTALGNVAG), 208 to 228 (MYMFIFMCSVASVGSPMGTGV), 238 to 258 (WLYWIDVIVGGFFIILFVFTP), 295 to 315 (FVFFMAIKIFFSEPIVSSLGI), 318 to 338 (GFVNGLLYFFLQAIWPVYFSI), 350 to 370 (YMAAMPACVILLWFEPLQCWL), 388 to 408 (FIMTLFYVWGFPIGIFMFAFC), 413 to 433 (IHYIVSLIGLTIFNIADYHIW), 454 to 474 (AFELPSNLGAVGFIHLSALMF), and 484 to 504 (AVVGFASLPLIALIYALYFYG).

The protein belongs to the major facilitator superfamily. CAR1 family.

The protein localises to the membrane. This is an uncharacterized protein from Schizosaccharomyces pombe (strain 972 / ATCC 24843) (Fission yeast).